A 585-amino-acid polypeptide reads, in one-letter code: YTH domain-containing family protein 3 (585 aa).

3 disordered regions span residues 1–51 (MSAT…SYPP), 244–277 (KPAK…MNIG), and 304–350 (PQPL…QPQL). Residue Ser-2 is modified to N-acetylserine. The span at 15-24 (NKVSVQNGSI) shows a compositional bias: polar residues. Ser-23 bears the Phosphoserine mark. A compositionally biased stretch (basic residues) spans 244–254 (KPAKPQPKLKP). The span at 329-350 (QQQQGPQPQAQPHQVQSQQPQL) shows a compositional bias: low complexity. A YTH domain is found at 416–550 (GRVFIIKSYS…EKAKQVLKII (135 aa)). RNA is bound by residues 422–424 (KSY), Asp-428, 438–439 (WC), Asn-468, Trp-492, and Trp-497.

This sequence belongs to the YTHDF family. YTHDF3 subfamily. Interacts with CNOT1; promoting recruitment of the CCR4-NOT complex. Interacts with YTHDF1. Interacts with YTHDF2. Interacts with PAN3.

The protein resides in the cytoplasm. It is found in the cytosol. Its subcellular location is the P-body. It localises to the stress granule. In terms of biological role, specifically recognizes and binds N6-methyladenosine (m6A)-containing RNAs, and regulates their stability. M6A is a modification present at internal sites of mRNAs and some non-coding RNAs and plays a role in mRNA stability and processing. Acts as a regulator of mRNA stability by promoting degradation of m6A-containing mRNAs via interaction with the CCR4-NOT complex or PAN3. The YTHDF paralogs (YTHDF1, YTHDF2 and YTHDF3) share m6A-containing mRNAs targets and act redundantly to mediate mRNA degradation and cellular differentiation. Acts as a negative regulator of type I interferon response by down-regulating interferon-stimulated genes (ISGs) expression: acts by binding to FOXO3 mRNAs. Binds to FOXO3 mRNAs independently of METTL3-mediated m6A modification. Can also act as a regulator of mRNA stability in cooperation with YTHDF2 by binding to m6A-containing mRNA and promoting their degradation. Recognizes and binds m6A-containing circular RNAs (circRNAs); circRNAs are generated through back-splicing of pre-mRNAs, a non-canonical splicing process promoted by dsRNA structures across circularizing exons. Promotes formation of phase-separated membraneless compartments, such as P-bodies or stress granules, by undergoing liquid-liquid phase separation upon binding to mRNAs containing multiple m6A-modified residues: polymethylated mRNAs act as a multivalent scaffold for the binding of YTHDF proteins, juxtaposing their disordered regions and thereby leading to phase separation. The resulting mRNA-YTHDF complexes then partition into different endogenous phase-separated membraneless compartments, such as P-bodies, stress granules or neuronal RNA granules. May also recognize and bind N1-methyladenosine (m1A)-containing mRNAs: inhibits trophoblast invasion by binding to m1A-methylated transcripts of IGF1R, promoting their degradation. The chain is YTH domain-containing family protein 3 from Mus musculus (Mouse).